The following is a 945-amino-acid chain: Isoleucine--tRNA ligase (945 aa).

The 'HIGH' region signature appears at 66 to 76; sequence PYANGDIHLGH. Glutamate 581 is an L-isoleucyl-5'-AMP binding site. Residues 622-626 carry the 'KMSKS' region motif; it reads KMSKS. ATP is bound at residue lysine 625. Residues cysteine 908, cysteine 911, cysteine 928, and cysteine 931 each contribute to the Zn(2+) site.

The protein belongs to the class-I aminoacyl-tRNA synthetase family. IleS type 1 subfamily. In terms of assembly, monomer. It depends on Zn(2+) as a cofactor.

Its subcellular location is the cytoplasm. It carries out the reaction tRNA(Ile) + L-isoleucine + ATP = L-isoleucyl-tRNA(Ile) + AMP + diphosphate. Its function is as follows. Catalyzes the attachment of isoleucine to tRNA(Ile). As IleRS can inadvertently accommodate and process structurally similar amino acids such as valine, to avoid such errors it has two additional distinct tRNA(Ile)-dependent editing activities. One activity is designated as 'pretransfer' editing and involves the hydrolysis of activated Val-AMP. The other activity is designated 'posttransfer' editing and involves deacylation of mischarged Val-tRNA(Ile). The protein is Isoleucine--tRNA ligase of Burkholderia cenocepacia (strain HI2424).